The chain runs to 389 residues: Phospho-N-acetylmuramoyl-pentapeptide-transferase (389 aa).

The next 11 membrane-spanning stretches (helical) occupy residues 25-45, 74-94, 97-117, 134-154, 167-187, 190-210, 222-242, 259-279, 286-306, 311-331, and 366-386; these read RAVM…PWVI, MGGV…CDWG, FIWV…VDDY, FFWQ…SVSE, WIEG…VPFF, VSYP…IVGS, GLVI…AYVM, AGEL…FLWF, VFMG…VAVI, IVLF…MLQV, and QVTV…LSSL.

It belongs to the glycosyltransferase 4 family. MraY subfamily. Mg(2+) is required as a cofactor.

It localises to the cell inner membrane. The catalysed reaction is UDP-N-acetyl-alpha-D-muramoyl-L-alanyl-gamma-D-glutamyl-meso-2,6-diaminopimeloyl-D-alanyl-D-alanine + di-trans,octa-cis-undecaprenyl phosphate = di-trans,octa-cis-undecaprenyl diphospho-N-acetyl-alpha-D-muramoyl-L-alanyl-D-glutamyl-meso-2,6-diaminopimeloyl-D-alanyl-D-alanine + UMP. It functions in the pathway cell wall biogenesis; peptidoglycan biosynthesis. Functionally, catalyzes the initial step of the lipid cycle reactions in the biosynthesis of the cell wall peptidoglycan: transfers peptidoglycan precursor phospho-MurNAc-pentapeptide from UDP-MurNAc-pentapeptide onto the lipid carrier undecaprenyl phosphate, yielding undecaprenyl-pyrophosphoryl-MurNAc-pentapeptide, known as lipid I. The sequence is that of Phospho-N-acetylmuramoyl-pentapeptide-transferase from Cupriavidus metallidurans (strain ATCC 43123 / DSM 2839 / NBRC 102507 / CH34) (Ralstonia metallidurans).